A 491-amino-acid polypeptide reads, in one-letter code: Cytochrome P450 2K3 (491 aa).

Cysteine 434 is a heme binding site.

Belongs to the cytochrome P450 family. The cofactor is heme.

It is found in the endoplasmic reticulum membrane. The protein localises to the microsome membrane. The enzyme catalyses an organic molecule + reduced [NADPH--hemoprotein reductase] + O2 = an alcohol + oxidized [NADPH--hemoprotein reductase] + H2O + H(+). The polypeptide is Cytochrome P450 2K3 (cyp2k3) (Oncorhynchus mykiss (Rainbow trout)).